The sequence spans 183 residues: Translocon-associated protein subunit beta (183 aa).

The first 17 residues, 1 to 17 (MRLLAVVVLALLAVSQA), serve as a signal peptide directing secretion. Over 18–146 (EEGARLLASK…REFDRRFSPH (129 aa)) the chain is Lumenal. Asn-88 is a glycosylation site (N-linked (GlcNAc...) (high mannose) asparagine). An N-linked (GlcNAc...) asparagine glycan is attached at Asn-104. A helical transmembrane segment spans residues 147–167 (FLDWAAFGVMTLPSIGIPLLL). The Cytoplasmic segment spans residues 168-183 (WYSSKRKYDTPKPKKN).

It belongs to the TRAP-beta family. In terms of assembly, heterotetramer of TRAP-alpha, TRAP-beta, TRAP-delta and TRAP-gamma. Interacts with STING1.

It localises to the endoplasmic reticulum membrane. Its function is as follows. TRAP proteins are part of a complex whose function is to bind calcium to the ER membrane and thereby regulate the retention of ER resident proteins. The protein is Translocon-associated protein subunit beta (Ssr2) of Mus musculus (Mouse).